The following is a 682-amino-acid chain: Potassium-transporting ATPase ATP-binding subunit (682 aa).

The next 4 membrane-spanning stretches (helical) occupy residues proline 34–valine 54, alanine 62–alanine 82, isoleucine 219–leucine 239, and valine 254–isoleucine 274. The active-site 4-aspartylphosphate intermediate is the aspartate 307. ATP contacts are provided by residues aspartate 344, glutamate 348, phenylalanine 377–serine 384, and lysine 395. The Mg(2+) site is built by aspartate 518 and aspartate 522. 3 consecutive transmembrane segments (helical) span residues phenylalanine 588 to methionine 608, alanine 616 to leucine 636, and leucine 662 to alanine 682.

It belongs to the cation transport ATPase (P-type) (TC 3.A.3) family. Type IA subfamily. As to quaternary structure, the system is composed of three essential subunits: KdpA, KdpB and KdpC.

It is found in the cell inner membrane. It carries out the reaction K(+)(out) + ATP + H2O = K(+)(in) + ADP + phosphate + H(+). Part of the high-affinity ATP-driven potassium transport (or Kdp) system, which catalyzes the hydrolysis of ATP coupled with the electrogenic transport of potassium into the cytoplasm. This subunit is responsible for energy coupling to the transport system and for the release of the potassium ions to the cytoplasm. This chain is Potassium-transporting ATPase ATP-binding subunit, found in Salmonella schwarzengrund (strain CVM19633).